The chain runs to 459 residues: 2-(3-amino-3-carboxypropyl)histidine synthase subunit 1 (459 aa).

Residues 1–68 (MEDDRAQVDL…AGANTSIEDS (68 aa)) form a disordered region. Over residues 41-61 (SAAAGKSSSSSSNSTSQPAGA) the composition is skewed to low complexity. Residues Cys-165, Cys-268, and Cys-403 each contribute to the [4Fe-4S] cluster site.

This sequence belongs to the DPH1/DPH2 family. DPH1 subfamily. In terms of assembly, component of the 2-(3-amino-3-carboxypropyl)histidine synthase complex composed of dph-1, dph-2, dph-3 and a NADH-dependent reductase, predominantly cbr-1. [4Fe-4S] cluster is required as a cofactor.

The protein localises to the cytoplasm. It catalyses the reaction L-histidyl-[translation elongation factor 2] + S-adenosyl-L-methionine = 2-[(3S)-amino-3-carboxypropyl]-L-histidyl-[translation elongation factor 2] + S-methyl-5'-thioadenosine + H(+). Its pathway is protein modification; peptidyl-diphthamide biosynthesis. Its function is as follows. Catalyzes the first step of diphthamide biosynthesis, a post-translational modification of histidine which occurs in elongation factor 2. Dph-1 and dph-2 transfer a 3-amino-3-carboxypropyl (ACP) group from S-adenosyl-L-methionine (SAM) to a histidine residue, the reaction is assisted by a reduction system comprising dph-3 and a NADH-dependent reductase, predominantly cbr-1. The chain is 2-(3-amino-3-carboxypropyl)histidine synthase subunit 1 (dph-1) from Neurospora crassa (strain ATCC 24698 / 74-OR23-1A / CBS 708.71 / DSM 1257 / FGSC 987).